The sequence spans 193 residues: Oligoribonuclease (193 aa).

Positions 20-183 (FVWLDCEMTG…ADVHESIEEL (164 aa)) constitute an Exonuclease domain. Tyrosine 141 is an active-site residue.

This sequence belongs to the oligoribonuclease family.

The protein resides in the cytoplasm. Functionally, 3'-to-5' exoribonuclease specific for small oligoribonucleotides. This chain is Oligoribonuclease, found in Paracidovorax citrulli (strain AAC00-1) (Acidovorax citrulli).